The following is a 65-amino-acid chain: Large ribosomal subunit protein bL32 (65 aa).

A disordered region spans residues 1-45 (MAVQQNKKTPSKRGMRRAHDVLKKPTFSVDFSSGETHRRHHVTPD).

Belongs to the bacterial ribosomal protein bL32 family.

The polypeptide is Large ribosomal subunit protein bL32 (Nitrosococcus oceani (strain ATCC 19707 / BCRC 17464 / JCM 30415 / NCIMB 11848 / C-107)).